Here is a 309-residue protein sequence, read N- to C-terminus: uncharacterized protein (309 aa).

6 helical membrane-spanning segments follow: residues 28–48, 73–93, 113–133, 157–177, 220–240, and 259–279; these read IIALSSLLTLLINHPSLIMKP, MMLNLFRWVCIAILVLVVIGW, LIVIDGGEQAAAVMTFLLLPI, ITAFISYFVIRIQVAVLYFHS, FVVIPTWGTLLVQIVIFAALF, and IFAVMLGLISFSIIMAGILIL.

The protein localises to the cell membrane. This is an uncharacterized protein from Bacillus subtilis (strain 168).